A 194-amino-acid chain; its full sequence is DISHFQNFRVTLLEYLTENGMNGAQKASWNKAFDAFEKYIIMGLSSLERVDPITGLSGLEKNAILDTWGKVRGNLQEVGKATFGKLFAAHPEYQQMFRFFQGVQLAFLVQSPKFAAHTQRVVSALDQTLLALNRPSDQFVYMIKELGLDHINRGTDRSFVEYLKESLGDSVDEFTVQSFGEVIVNFLNEGLRQA.

Globin domains follow at residues 1 to 45 (DISH…MGLS) and 55 to 194 (GLSG…LRQA). Position 150 (His150) interacts with heme b.

The protein belongs to the globin family. As to quaternary structure, artemia hemoglobin is a dimer of two similar sized subunits. Each subunit represents a globin chain which exists in two forms (alpha and beta), thus making possible three different phenotypes (HB1, alpha(2), HB2, alpha/beta, HB3, beta(2)). The globin chain is a polymer of eight heme-binding covalently linked domains.

The chain is Extracellular globin-E1 from Artemia sp. (Brine shrimp).